The following is a 328-amino-acid chain: MQNQLNTLLQSAKKSVADAQSEIVLEEIRVDYLGKKGKLTELLKSVGQMPADQRPLLGKAVNEIKREIQQLLNAKSTQLREKSLQEKLNKEKVDITLRGRYDHLGAIHPISRVSERVSQLFSMLGFQIAEGPEIENEYYNFEALNIPADHPARTMADTFYFSGDKLLRTHTSPVQIREMEKQGVPIRLIALGRVYRRDLDQTHTPMFHQVEGLVIDKRSTFANLKGLLQQFLNCFFEKDVRLRFRPSYFPFTEPSAEVDIYQPRTDKWLEVLGCGMVHPNVLRNLNIDPDEYSGFAFGIGLDRLAMLRYEVTDLRLFFENDLRFLGQF.

Glu253 contacts Mg(2+).

This sequence belongs to the class-II aminoacyl-tRNA synthetase family. Phe-tRNA synthetase alpha subunit type 1 subfamily. In terms of assembly, tetramer of two alpha and two beta subunits. Requires Mg(2+) as cofactor.

It is found in the cytoplasm. The catalysed reaction is tRNA(Phe) + L-phenylalanine + ATP = L-phenylalanyl-tRNA(Phe) + AMP + diphosphate + H(+). This Coxiella burnetii (strain CbuG_Q212) (Coxiella burnetii (strain Q212)) protein is Phenylalanine--tRNA ligase alpha subunit.